Consider the following 388-residue polypeptide: Succinate--CoA ligase [ADP-forming] subunit beta (388 aa).

Residues 9-244 form the ATP-grasp domain; the sequence is KQLFARYGLP…PSQEDSREAH (236 aa). Residues lysine 46, 53-55, glutamate 99, threonine 102, and glutamate 107 each bind ATP; that span reads GRG. Mg(2+) is bound by residues asparagine 199 and aspartate 213. Substrate contacts are provided by residues asparagine 264 and 321–323; that span reads GIV.

It belongs to the succinate/malate CoA ligase beta subunit family. Heterotetramer of two alpha and two beta subunits. Mg(2+) is required as a cofactor.

It carries out the reaction succinate + ATP + CoA = succinyl-CoA + ADP + phosphate. The enzyme catalyses GTP + succinate + CoA = succinyl-CoA + GDP + phosphate. It participates in carbohydrate metabolism; tricarboxylic acid cycle; succinate from succinyl-CoA (ligase route): step 1/1. Functionally, succinyl-CoA synthetase functions in the citric acid cycle (TCA), coupling the hydrolysis of succinyl-CoA to the synthesis of either ATP or GTP and thus represents the only step of substrate-level phosphorylation in the TCA. The beta subunit provides nucleotide specificity of the enzyme and binds the substrate succinate, while the binding sites for coenzyme A and phosphate are found in the alpha subunit. This is Succinate--CoA ligase [ADP-forming] subunit beta from Pectobacterium carotovorum subsp. carotovorum (strain PC1).